A 206-amino-acid chain; its full sequence is Holliday junction branch migration complex subunit RuvA (206 aa).

A domain I region spans residues 1 to 64 (MIGRLSGTIL…EDAQLLYGFN (64 aa)). Residues 65-143 (KKSERELFRE…GWGEGDLFTP (79 aa)) are domain II. Residues 144–157 (ASDAAASNAEIQKY) form a flexible linker region. Positions 158–206 (SSARAEDEAVSALIALGYKALQAAKVVSQVVKPEMSSENIIREALRSMV) are domain III.

Belongs to the RuvA family. As to quaternary structure, homotetramer. Forms an RuvA(8)-RuvB(12)-Holliday junction (HJ) complex. HJ DNA is sandwiched between 2 RuvA tetramers; dsDNA enters through RuvA and exits via RuvB. An RuvB hexamer assembles on each DNA strand where it exits the tetramer. Each RuvB hexamer is contacted by two RuvA subunits (via domain III) on 2 adjacent RuvB subunits; this complex drives branch migration. In the full resolvosome a probable DNA-RuvA(4)-RuvB(12)-RuvC(2) complex forms which resolves the HJ.

It localises to the cytoplasm. Its function is as follows. The RuvA-RuvB-RuvC complex processes Holliday junction (HJ) DNA during genetic recombination and DNA repair, while the RuvA-RuvB complex plays an important role in the rescue of blocked DNA replication forks via replication fork reversal (RFR). RuvA specifically binds to HJ cruciform DNA, conferring on it an open structure. The RuvB hexamer acts as an ATP-dependent pump, pulling dsDNA into and through the RuvAB complex. HJ branch migration allows RuvC to scan DNA until it finds its consensus sequence, where it cleaves and resolves the cruciform DNA. In Photobacterium profundum (strain SS9), this protein is Holliday junction branch migration complex subunit RuvA.